A 174-amino-acid polypeptide reads, in one-letter code: Superoxide dismutase [Cu-Zn] (174 aa).

A signal peptide spans Met1–Ala20. Residues His68, His70, and His93 each coordinate Cu cation. A disulfide bridge connects residues Cys75 and Cys170. Residues His93, His102, His110, and Asp113 each coordinate Zn(2+). His148 is a binding site for Cu cation.

Belongs to the Cu-Zn superoxide dismutase family. In terms of assembly, homodimer. The cofactor is Cu cation. It depends on Zn(2+) as a cofactor.

Its subcellular location is the periplasm. The catalysed reaction is 2 superoxide + 2 H(+) = H2O2 + O2. Its function is as follows. Destroys radicals which are normally produced within the cells and which are toxic to biological systems. The protein is Superoxide dismutase [Cu-Zn] (sodC) of Brucella melitensis biotype 1 (strain ATCC 23456 / CCUG 17765 / NCTC 10094 / 16M).